The primary structure comprises 278 residues: Undecaprenyl-diphosphatase (278 aa).

Transmembrane regions (helical) follow at residues 2–22 (ALVE…TEWL), 44–64 (AFME…VVLL), 85–105 (IEMW…GLLW), 113–133 (FYNY…FIVI), 150–170 (ITYT…IFPG), 189–209 (TVAA…ASAL), 223–243 (LMIL…SIKF), and 253–273 (FKIF…YFSA).

The protein belongs to the UppP family.

It is found in the cell membrane. It carries out the reaction di-trans,octa-cis-undecaprenyl diphosphate + H2O = di-trans,octa-cis-undecaprenyl phosphate + phosphate + H(+). Its function is as follows. Catalyzes the dephosphorylation of undecaprenyl diphosphate (UPP). Confers resistance to bacitracin. In Desulfitobacterium hafniense (strain DSM 10664 / DCB-2), this protein is Undecaprenyl-diphosphatase.